Reading from the N-terminus, the 102-residue chain is Large ribosomal subunit protein bL21 (102 aa).

Belongs to the bacterial ribosomal protein bL21 family. In terms of assembly, part of the 50S ribosomal subunit. Contacts protein L20.

This protein binds to 23S rRNA in the presence of protein L20. The sequence is that of Large ribosomal subunit protein bL21 from Phytoplasma mali (strain AT).